The sequence spans 154 residues: 6,7-dimethyl-8-ribityllumazine synthase (154 aa).

5-amino-6-(D-ribitylamino)uracil contacts are provided by residues F22, 57-59 (VCE), and 81-83 (TVI). 86-87 (KT) serves as a coordination point for (2S)-2-hydroxy-3-oxobutyl phosphate. Catalysis depends on H89, which acts as the Proton donor. Position 114 (V114) interacts with 5-amino-6-(D-ribitylamino)uracil. R128 is a binding site for (2S)-2-hydroxy-3-oxobutyl phosphate.

The protein belongs to the DMRL synthase family. In terms of assembly, forms an icosahedral capsid composed of 60 subunits, arranged as a dodecamer of pentamers.

The enzyme catalyses (2S)-2-hydroxy-3-oxobutyl phosphate + 5-amino-6-(D-ribitylamino)uracil = 6,7-dimethyl-8-(1-D-ribityl)lumazine + phosphate + 2 H2O + H(+). It participates in cofactor biosynthesis; riboflavin biosynthesis; riboflavin from 2-hydroxy-3-oxobutyl phosphate and 5-amino-6-(D-ribitylamino)uracil: step 1/2. Its function is as follows. Catalyzes the formation of 6,7-dimethyl-8-ribityllumazine by condensation of 5-amino-6-(D-ribitylamino)uracil with 3,4-dihydroxy-2-butanone 4-phosphate. This is the penultimate step in the biosynthesis of riboflavin. This is 6,7-dimethyl-8-ribityllumazine synthase from Wigglesworthia glossinidia brevipalpis.